The primary structure comprises 104 residues: uncharacterized protein (104 aa).

This is an uncharacterized protein from Pasteurella multocida (strain Pm70).